Consider the following 266-residue polypeptide: Killer cell lectin-like receptor 5 (266 aa).

The Cytoplasmic portion of the chain corresponds to 1 to 44; the sequence is MSEPEVTYSTVRLHKSSGLQRLVSHEEIQGPGEAGYRKCSVPWQ. A helical; Signal-anchor for type II membrane protein membrane pass occupies residues 45-66; the sequence is LTVRSLGIFCFLLLVTVAVLAV. Residues 67–266 lie on the Extracellular side of the membrane; that stretch reads KIFQYSQHKQ…CGKKLDHFPG (200 aa). 2 N-linked (GlcNAc...) asparagine glycosylation sites follow: N87 and N104. One can recognise a C-type lectin domain in the interval 143–261; the sequence is GVKHWFCYGT…SYFCICGKKL (119 aa). 4 cysteine pairs are disulfide-bonded: C149–C154, C167–C255, C171–C257, and C236–C249. N250 carries an N-linked (GlcNAc...) asparagine glycan.

In terms of assembly, homodimer; disulfide-linked. As to expression, mostly expressed in NK cells, but also observed on NK T and memory T-cells.

It is found in the membrane. Functionally, receptor on natural killer (NK) cells for class I MHC. This is Killer cell lectin-like receptor 5 (Klra5) from Mus musculus (Mouse).